The following is a 224-amino-acid chain: MAEKEEDVKLLGFWASPFTRRVEMAFKLKGVPYEYLEQDIVNKSPLLLQINPVYKKVPVLVYKGKILSESHVILEYIDQIWKNNPILPQDPYEKAMALFWAKFVDEQVGPVAFMSVAKAEKGVEVAIKEAQELFMFLEKEVTGKDFFGGKTIGFLDLVAGSMIPFCLARGWEGMGIDMIPEEKFPELNRWIKNLKEIEIVRECIPPREEQIEHMKKVVERIKSA.

A GST N-terminal domain is found at 6–85; it reads EDVKLLGFWA…YIDQIWKNNP (80 aa). Glutathione contacts are provided by residues 16 to 17, 42 to 43, 56 to 57, and 69 to 70; these read SP, NK, KV, and ES. The GST C-terminal domain maps to 90 to 217; the sequence is DPYEKAMALF…EEQIEHMKKV (128 aa). Thr151 bears the Phosphothreonine mark.

Belongs to the GST superfamily. Tau family.

It is found in the cytoplasm. The protein localises to the cytosol. The enzyme catalyses RX + glutathione = an S-substituted glutathione + a halide anion + H(+). In terms of biological role, may be involved in the conjugation of reduced glutathione to a wide number of exogenous and endogenous hydrophobic electrophiles and have a detoxification role against certain herbicides. The sequence is that of Glutathione S-transferase U4 (GSTU4) from Arabidopsis thaliana (Mouse-ear cress).